The chain runs to 314 residues: Dihydroorotate dehydrogenase (fumarate) (314 aa).

Substrate contacts are provided by residues lysine 46, 70-74 (NSMGL), and asparagine 130. FMN is bound at residue 46 to 47 (KS). Residue asparagine 130 coordinates FMN. Residues serine 132 and cysteine 133 each act as nucleophile in the active site. Residues lysine 167 and isoleucine 195 each coordinate FMN. A substrate-binding site is contributed by 196 to 197 (NS). Residues glycine 224, 252–253 (GG), and 274–275 (GT) contribute to the FMN site.

Belongs to the dihydroorotate dehydrogenase family. Type 1 subfamily. As to quaternary structure, homodimer. FMN serves as cofactor.

Its subcellular location is the cytoplasm. It catalyses the reaction (S)-dihydroorotate + fumarate = orotate + succinate. The protein operates within pyrimidine metabolism; UMP biosynthesis via de novo pathway. Functionally, catalyzes the conversion of dihydroorotate to orotate with fumarate as the electron acceptor. This is Dihydroorotate dehydrogenase (fumarate) (URA1) from Saccharomyces bayanus (Yeast).